We begin with the raw amino-acid sequence, 187 residues long: Small ribosomal subunit protein uS5 (187 aa).

The region spanning 20-83 (FADRLVAINR…EQAKRQMIRV (64 aa)) is the S5 DRBM domain. The segment at 155–187 (KKEQSPRSVAQRRGKKVADILPKRDEAPAEAEA) is disordered. The segment covering 170–181 (KVADILPKRDEA) has biased composition (basic and acidic residues).

The protein belongs to the universal ribosomal protein uS5 family. As to quaternary structure, part of the 30S ribosomal subunit. Contacts proteins S4 and S8.

Its function is as follows. With S4 and S12 plays an important role in translational accuracy. Located at the back of the 30S subunit body where it stabilizes the conformation of the head with respect to the body. The sequence is that of Small ribosomal subunit protein uS5 from Ruegeria sp. (strain TM1040) (Silicibacter sp.).